We begin with the raw amino-acid sequence, 624 residues long: (-)-beta-phellandrene synthase 4, chloroplastic (624 aa).

The transit peptide at 1 to 48 (MAIVSSVPLASKSCLHKSLISSIHKLKPFCRTIPTLGMSRPGKSVMPS) directs the protein to the chloroplast. A disordered region spans residues 41–60 (PGKSVMPSMSMSSPVSDDGV). A compositionally biased stretch (low complexity) spans 44 to 56 (SVMPSMSMSSPVS). Positions 375, 379, and 527 each coordinate Mg(2+). The short motif at 375 to 379 (DDMYD) is the DDXXD motif element.

The protein belongs to the terpene synthase family. Tpsd subfamily. The cofactor is Mg(2+). Requires Mn(2+) as cofactor.

The protein localises to the plastid. The protein resides in the chloroplast. It catalyses the reaction (2E)-geranyl diphosphate = (-)-beta-phellandrene + diphosphate. Its pathway is terpene metabolism; oleoresin biosynthesis. Its function is as follows. Terpene synthase (TPS) involved in the biosynthesis of monoterpene natural products included in conifer oleoresin secretions and volatile emissions; these compounds contribute to biotic and abiotic stress defense against herbivores and pathogens. Catalyzes the conversion of (2E)-geranyl diphosphate (GPP) to (-)-beta-phellandrene. The polypeptide is (-)-beta-phellandrene synthase 4, chloroplastic (Picea sitchensis (Sitka spruce)).